A 276-amino-acid chain; its full sequence is Large ribosomal subunit protein uL2 (276 aa).

The segment at 225-276 (MNPNDHPHGGGEGRNPIGRNPVTPWGKPALGAKTRKKKHPSNRFIVKRRGKK) is disordered. Positions 257–276 (KTRKKKHPSNRFIVKRRGKK) are enriched in basic residues.

Belongs to the universal ribosomal protein uL2 family. As to quaternary structure, part of the 50S ribosomal subunit. Forms a bridge to the 30S subunit in the 70S ribosome.

One of the primary rRNA binding proteins. Required for association of the 30S and 50S subunits to form the 70S ribosome, for tRNA binding and peptide bond formation. It has been suggested to have peptidyltransferase activity; this is somewhat controversial. Makes several contacts with the 16S rRNA in the 70S ribosome. This chain is Large ribosomal subunit protein uL2, found in Desulfitobacterium hafniense (strain Y51).